A 308-amino-acid chain; its full sequence is Acetyl-coenzyme A carboxylase carboxyl transferase subunit alpha (308 aa).

In terms of domain architecture, CoA carboxyltransferase C-terminal spans 36-286; that stretch reads ELEKEVSSVY…ESYFLKAFEE (251 aa).

The protein belongs to the AccA family. Acetyl-CoA carboxylase is a heterohexamer composed of biotin carboxyl carrier protein (AccB), biotin carboxylase (AccC) and two subunits each of ACCase subunit alpha (AccA) and ACCase subunit beta (AccD).

It is found in the cytoplasm. It carries out the reaction N(6)-carboxybiotinyl-L-lysyl-[protein] + acetyl-CoA = N(6)-biotinyl-L-lysyl-[protein] + malonyl-CoA. The protein operates within lipid metabolism; malonyl-CoA biosynthesis; malonyl-CoA from acetyl-CoA: step 1/1. In terms of biological role, component of the acetyl coenzyme A carboxylase (ACC) complex. First, biotin carboxylase catalyzes the carboxylation of biotin on its carrier protein (BCCP) and then the CO(2) group is transferred by the carboxyltransferase to acetyl-CoA to form malonyl-CoA. The chain is Acetyl-coenzyme A carboxylase carboxyl transferase subunit alpha from Helicobacter hepaticus (strain ATCC 51449 / 3B1).